Here is a 299-residue protein sequence, read N- to C-terminus: MNILLFGKTGQVGWELQRSLAPVGNLIALDVHSKEFCGDFSNPKGVAETVRKLRPDVIVNAAAHTAVDKAESEPELAQLLNATSVEAIAKAANETGAWVVHYSTDYVFPGTGDIPWQETDATSPLNVYGKTKLAGEKALQDNCPKHLIFRTSWVYAGKGNNFAKTMLRLAKERQTLSVINDQYGAPTGAELLADCTAHAIRVALNKPEVAGLYHLVAGGTTTWHDYAALVFDEARKAGITLALTELNAVPTSAYPTPASRPGNSRLNTEKFQRNFDLILPQWELGVKRMLTEMFTTTTI.

Residues 10–12 (GQV), Asp-30, 39–40 (DF), and 63–65 (AHT) each bind NADH. Residue 11 to 12 (QV) participates in NADPH binding. Residues 39 to 40 (DF), 63 to 65 (AHT), and Tyr-102 each bind NADPH. 104–105 (TD) is a binding site for dTDP-beta-L-rhamnose. Tyr-128 and Lys-132 together coordinate NADH. Positions 128 and 132 each coordinate NADPH. The Proton donor/acceptor role is filled by Tyr-128. Position 153 (Trp-153) interacts with dTDP-beta-L-rhamnose.

This sequence belongs to the dTDP-4-dehydrorhamnose reductase family. As to quaternary structure, homodimer. The cofactor is Mg(2+).

The catalysed reaction is dTDP-beta-L-rhamnose + NADP(+) = dTDP-4-dehydro-beta-L-rhamnose + NADPH + H(+). It functions in the pathway carbohydrate biosynthesis; dTDP-L-rhamnose biosynthesis. The protein operates within bacterial outer membrane biogenesis; LPS O-antigen biosynthesis. Involved in the biosynthesis of the dTDP-L-rhamnose which is an important component of lipopolysaccharide (LPS). Catalyzes the reduction of dTDP-6-deoxy-L-lyxo-4-hexulose to yield dTDP-L-rhamnose. RmlD uses NADH and NADPH nearly equally well. The protein is dTDP-4-dehydrorhamnose reductase (rfbD) of Salmonella typhimurium (strain LT2 / SGSC1412 / ATCC 700720).